The primary structure comprises 98 residues: MEHGDRHITVVDEQGNEQLCEILFTFESDDFGKSYVFYYPVSAEAEDEDGETEVHVSAFIPGDENEEGELLPIETEEEWDMIEEVWNTFCAEQEEGEE.

The protein belongs to the UPF0473 family.

The chain is UPF0473 protein GTNG_2486 from Geobacillus thermodenitrificans (strain NG80-2).